The following is a 596-amino-acid chain: Phosphoprotein (596 aa).

Composition is skewed to polar residues over residues 1–11, 38–66, and 74–85; these read MENNAKDNQIM, TDSQ…QLES, and ENSGSVNENRQL. 3 disordered regions span residues 1–25, 38–196, and 220–352; these read MENN…SSDI, TDSQ…ESIS, and KNTR…EEST. Positions 33–41 are N0 binding; sequence EFILSTDSQ. Basic and acidic residues predominate over residues 88-97; the sequence is SHERATETKN. Residues 127–144 are compositionally biased toward polar residues; sequence ISRSSPDPNNGTQIQESI. Basic and acidic residues-rich tracts occupy residues 151–168 and 233–249; these read EMDK…KDVP and EDDK…EDTN. The span at 270-324 shows a compositional bias: polar residues; the sequence is TLKISTTTGESTRPQSGSQGKRITSWNILNSESGSRTESTSQNSQIPTSGKSNTV. Basic and acidic residues predominate over residues 331–352; that stretch reads LESRIKTQKTDGKEREDTEEST. Residues 374–441 are multimerization; the sequence is LDLYQDKRVV…KMDESHRRLI (68 aa). Positions 416–436 form a coiled coil; that stretch reads LNQIQNEILSLKTDLKKMDES. The segment at 442 to 475 is l protein binding; the sequence is ENQKEQLSLITSLISNLKIMTERGGKKDQPENSG.

Belongs to the respirovirus P protein family. In terms of assembly, homotetramer. Interacts (via multimerization domain) with polymerase L; this interaction forms the polymerase complex. Interacts (via N-terminus) with N0; this interaction allows P to chaperon N0 before encapsidation and form the N-P complex. Interacts (via C-terminus) with N-RNA template; this interaction positions the polymerase on the template.

In terms of biological role, essential cofactor of the RNA polymerase L that plays a central role in the transcription and replication by forming the polymerase complex with RNA polymerase L and recruiting L to the genomic N-RNA template for RNA synthesis. Also plays a central role in the encapsidation of nascent RNA chains by forming the encapsidation complex with the nucleocapsid protein N (N-P complex). Acts as a chaperone for newly synthesized free N protein, so-called N0, allowing encapsidation of nascent RNA chains during replication. The nucleoprotein protein N prevents excessive phosphorylation of P, which leads to down-regulation of viral transcription/ replication. Participates, together with N, in the formation of viral factories (viroplasms), which are large inclusions in the host cytoplasm where replication takes place. Recruits host PI4KB and remodel the host endoplasmic reticulum membrane to form viral replication factories. This Bovine parainfluenza 3 virus (BPIV-3) protein is Phosphoprotein (P/V/D).